Here is an 805-residue protein sequence, read N- to C-terminus: Mediator of RNA polymerase II transcription subunit 25 (805 aa).

Disordered regions lie at residues 430-455 (GSAQ…GQTV) and 786-805 (SQSQ…GFMN). Low complexity-rich tracts occupy residues 438 to 451 (SAPS…PSMS) and 786 to 795 (SQSQGSSQGL).

Belongs to the Mediator complex subunit 25 family. In terms of assembly, interacts with MYC2 (via N-terminus). MED25 competes with JAZ7 for binding to MYC2.

Component of the Mediator complex, a coactivator involved in the regulated transcription of nearly all RNA polymerase II-dependent genes. Mediator functions as a bridge to convey information from gene-specific regulatory proteins to the basal RNA polymerase II transcription machinery. Mediator is recruited to promoters by direct interactions with regulatory proteins and serves as a scaffold for the assembly of a functional pre-initiation complex with RNA polymerase II and the general transcription factors. Plays a positive role in wound-induced activation of jasmonate-responsive genes whose promoters are targeted by MYC2. The protein is Mediator of RNA polymerase II transcription subunit 25 of Solanum lycopersicum (Tomato).